Consider the following 118-residue polypeptide: DNA-directed RNA polymerase subunit omega (118 aa).

It belongs to the RNA polymerase subunit omega family. As to quaternary structure, the RNAP catalytic core consists of 2 alpha, 1 beta, 1 beta' and 1 omega subunit. When a sigma factor is associated with the core the holoenzyme is formed, which can initiate transcription.

The enzyme catalyses RNA(n) + a ribonucleoside 5'-triphosphate = RNA(n+1) + diphosphate. Promotes RNA polymerase assembly. Latches the N- and C-terminal regions of the beta' subunit thereby facilitating its interaction with the beta and alpha subunits. The protein is DNA-directed RNA polymerase subunit omega of Paracoccus denitrificans (strain Pd 1222).